Consider the following 394-residue polypeptide: Flap endonuclease 1 (394 aa).

The tract at residues 1-103 (MGIKSLYQII…GELAKRTMRK (103 aa)) is N-domain. Mg(2+) is bound at residue D34. Residue R69 participates in DNA binding. D85 provides a ligand contact to Mg(2+). The interval 102-123 (RKAEAQEAAEEAKETGTAEDVE) is disordered. The segment at 121-252 (DVEKFSRRTV…NTALKMIRDH (132 aa)) is I-domain. Mg(2+) contacts are provided by E157, E159, D178, and D180. E157 is a binding site for DNA. Positions 230 and 232 each coordinate DNA. Residue D232 participates in Mg(2+) binding. The tract at residues 340–348 (QQSRLEGFF) is interaction with PCNA. A disordered region spans residues 349-394 (KPVAKTEQQKATAKRKAEEKAELAKKKKKEDAKAKRAMGAKPRGAR). The segment covering 363–382 (RKAEEKAELAKKKKKEDAKA) has biased composition (basic and acidic residues). Over residues 383–394 (KRAMGAKPRGAR) the composition is skewed to basic residues.

Belongs to the XPG/RAD2 endonuclease family. FEN1 subfamily. Interacts with PCNA. Three molecules of FEN1 bind to one PCNA trimer with each molecule binding to one PCNA monomer. PCNA stimulates the nuclease activity without altering cleavage specificity. The cofactor is Mg(2+). In terms of processing, phosphorylated. Phosphorylation upon DNA damage induces relocalization to the nuclear plasma.

The protein localises to the nucleus. It is found in the nucleolus. It localises to the nucleoplasm. The protein resides in the mitochondrion. Functionally, structure-specific nuclease with 5'-flap endonuclease and 5'-3' exonuclease activities involved in DNA replication and repair. During DNA replication, cleaves the 5'-overhanging flap structure that is generated by displacement synthesis when DNA polymerase encounters the 5'-end of a downstream Okazaki fragment. It enters the flap from the 5'-end and then tracks to cleave the flap base, leaving a nick for ligation. Also involved in the long patch base excision repair (LP-BER) pathway, by cleaving within the apurinic/apyrimidinic (AP) site-terminated flap. Acts as a genome stabilization factor that prevents flaps from equilibrating into structures that lead to duplications and deletions. Also possesses 5'-3' exonuclease activity on nicked or gapped double-stranded DNA, and exhibits RNase H activity. Also involved in replication and repair of rDNA and in repairing mitochondrial DNA. The protein is Flap endonuclease 1 of Arthroderma otae (strain ATCC MYA-4605 / CBS 113480) (Microsporum canis).